We begin with the raw amino-acid sequence, 214 residues long: Uracil phosphoribosyltransferase (214 aa).

5-phospho-alpha-D-ribose 1-diphosphate is bound by residues R81, R106, and 133–141; that span reads DPMLATGNS. Uracil-binding positions include I196 and 201 to 203; that span reads GDA. D202 is a binding site for 5-phospho-alpha-D-ribose 1-diphosphate.

The protein belongs to the UPRTase family. Mg(2+) is required as a cofactor.

The enzyme catalyses UMP + diphosphate = 5-phospho-alpha-D-ribose 1-diphosphate + uracil. It functions in the pathway pyrimidine metabolism; UMP biosynthesis via salvage pathway; UMP from uracil: step 1/1. With respect to regulation, allosterically activated by GTP. Its function is as follows. Catalyzes the conversion of uracil and 5-phospho-alpha-D-ribose 1-diphosphate (PRPP) to UMP and diphosphate. The chain is Uracil phosphoribosyltransferase from Legionella pneumophila (strain Paris).